The primary structure comprises 1186 residues: ATP-dependent helicase/nuclease subunit A (1186 aa).

The UvrD-like helicase ATP-binding domain occupies 2 to 460 (NFSKNQRAVI…IELSENYRSQ (459 aa)). 23–30 (ASAGSGKT) serves as a coordination point for ATP. One can recognise a UvrD-like helicase C-terminal domain in the interval 487 to 771 (DVELKAANRD…SVMTIHAAKG (285 aa)).

This sequence belongs to the helicase family. AddA subfamily. Heterodimer of AddA and AddB/RexB. Requires Mg(2+) as cofactor.

The enzyme catalyses Couples ATP hydrolysis with the unwinding of duplex DNA by translocating in the 3'-5' direction.. It carries out the reaction ATP + H2O = ADP + phosphate + H(+). In terms of biological role, the heterodimer acts as both an ATP-dependent DNA helicase and an ATP-dependent, dual-direction single-stranded exonuclease. Recognizes the chi site generating a DNA molecule suitable for the initiation of homologous recombination. The AddA nuclease domain is required for chi fragment generation; this subunit has the helicase and 3' -&gt; 5' nuclease activities. The polypeptide is ATP-dependent helicase/nuclease subunit A (Oenococcus oeni (strain ATCC BAA-331 / PSU-1)).